A 57-amino-acid polypeptide reads, in one-letter code: Preprotein translocase subunit SecG (57 aa).

The Cytoplasmic segment spans residues 1–33 (MARRRRYEGLNPFVAAGLIKFSEEGELERIKLT). The chain crosses the membrane as a helical span at residues 34–55 (PKSAVVISVALIAAILVLNLIH). Residues 56-57 (PL) lie on the Extracellular side of the membrane.

It belongs to the SEC61-beta family. In terms of assembly, component of the protein translocase complex. Heterotrimer consisting of alpha (SecY), beta (SecG) and gamma (SecE) subunits. Can form oligomers of the heterotrimer.

It localises to the cell membrane. In terms of biological role, involved in protein export. The function of the beta subunit is unknown, but it may be involved in stabilization of the trimeric complex. This chain is Preprotein translocase subunit SecG, found in Pyrobaculum neutrophilum (strain DSM 2338 / JCM 9278 / NBRC 100436 / V24Sta) (Thermoproteus neutrophilus).